A 380-amino-acid chain; its full sequence is Cytochrome b (380 aa).

A run of 4 helical transmembrane segments spans residues 34-54 (FGSLLGICLITQILTGLLLAM), 78-99 (WLIRNLHANGASFFFICIYFHI), 114-134 (WNTGIILLLTLMATAFVGYVL), and 179-199 (FFALHFLLPFMITGLTLIHLT). Residues His84 and His98 each contribute to the heme b site. Residues His183 and His197 each coordinate heme b. A ubiquinone is bound at residue His202. 4 helical membrane passes run 227–247 (TKDILGFALMLLPLTTLALFS), 289–309 (LGGVLALAASVLILFLSPLLH), 321–341 (LSQLLFWTLVANLLILTWIGS), and 348–368 (FIIIGQLASTTYFIILLILFP).

It belongs to the cytochrome b family. In terms of assembly, the cytochrome bc1 complex contains 11 subunits: 3 respiratory subunits (MT-CYB, CYC1 and UQCRFS1), 2 core proteins (UQCRC1 and UQCRC2) and 6 low-molecular weight proteins (UQCRH/QCR6, UQCRB/QCR7, UQCRQ/QCR8, UQCR10/QCR9, UQCR11/QCR10 and a cleavage product of UQCRFS1). This cytochrome bc1 complex then forms a dimer. Heme b serves as cofactor.

The protein resides in the mitochondrion inner membrane. Its function is as follows. Component of the ubiquinol-cytochrome c reductase complex (complex III or cytochrome b-c1 complex) that is part of the mitochondrial respiratory chain. The b-c1 complex mediates electron transfer from ubiquinol to cytochrome c. Contributes to the generation of a proton gradient across the mitochondrial membrane that is then used for ATP synthesis. The polypeptide is Cytochrome b (MT-CYB) (Pygoscelis papua (Gentoo penguin)).